A 967-amino-acid polypeptide reads, in one-letter code: Dolichyl-phosphooligosaccharide-protein glycotransferase 1 (967 aa).

Residues 1–21 (MVKTQIKEKKKDEKVTIPLPG) are Cytoplasmic-facing. Residues 22 to 42 (KIKTVLAFLVVLAFAAYGFYI) traverse the membrane as a helical segment. Residues 43–112 (RHLTAGKYFS…ISIFGYNELE (70 aa)) are Extracellular-facing. A DXD motif 1 motif is present at residues 53 to 55 (DPD). A Mn(2+)-binding site is contributed by Asp55. The helical transmembrane segment at 113-133 (AFLLWPPFVGFLSVIGVYLLG) threads the bilayer. The Cytoplasmic segment spans residues 134-135 (RK). A helical transmembrane segment spans residues 136 to 156 (VLNEWAGMWGAIILSVLTANF). Residues 157–165 (SRTFSGNAR) are Extracellular-facing. The Mn(2+) site is built by Arg165 and Asp167. Positions 165–167 (RGD) match the DXD motif 2 motif. A helical transmembrane segment spans residues 166-186 (GDGPFMMLFTFSAVLMLYYLT). Residues 187-193 (EENKNKK) are Cytoplasmic-facing. Residues 194-214 (IIWGTLFVLLAGISTAAWNGS) form a helical membrane-spanning segment. Residue Pro215 is a topological domain, extracellular. The chain crosses the membrane as a helical span at residues 216 to 236 (FGLMVLLGFASFQTIILFIFG). The Cytoplasmic portion of the chain corresponds to 237 to 247 (KINELREFIKE). The chain crosses the membrane as a helical span at residues 248-268 (YYPAYLGILAISYLLTIPGIG). Residue Lys269 is a topological domain, extracellular. A helical membrane pass occupies residues 270–290 (IGGFVRFAFEVFLGLVFLAIV). Over 291–306 (MLYGGKYLNYSDKKHR) the chain is Cytoplasmic. Residues 307–327 (FAVVAVIVIAGFAGAYIYVGP) form a helical membrane-spanning segment. Over 328 to 360 (KLFTLMGGAYQSTQVYETVQELAKTDWGDVKVY) the chain is Extracellular. The TIXE motif motif lies at 345-348 (TVQE). The helical transmembrane segment at 361–381 (YGVEKPNGIVFFLGLVGAMIV) threads the bilayer. At 382–396 (TARYLYKLFKDGRRP) the chain is on the cytoplasmic side. A helical transmembrane segment spans residues 397–417 (HEELFAITFYVMSIYLLWTAA). Position 418 (Arg418) is a topological domain, extracellular. Arg418 provides a ligand contact to a glycophospholipid. The chain crosses the membrane as a helical span at residues 419–439 (FLFLASYAIALMSGVFAGYVL). Residues 440 to 453 (ETVEKMKESIPIKA) are Cytoplasmic-facing. The helical transmembrane segment at 454–474 (ALGGVIAIMLLLIPLTHGPLL) threads the bilayer. Residues 475 to 967 (AQSAKSMRTT…LEVSASAPHH (493 aa)) lie on the Extracellular side of the membrane. The segment at 511 to 513 (WWD) is interacts with target acceptor peptide in protein substrate. The WWDYG motif motif lies at 511–515 (WWDYG). Tyr516 is a binding site for a glycophospholipid. The short motif at 571-578 (DWAKFNAI) is the DK motif element.

It belongs to the STT3 family. Requires Mn(2+) as cofactor. Mg(2+) serves as cofactor.

The protein localises to the cell membrane. It carries out the reaction an archaeal dolichyl phosphooligosaccharide + [protein]-L-asparagine = an archaeal dolichyl phosphate + a glycoprotein with the oligosaccharide chain attached by N-beta-D-glycosyl linkage to a protein L-asparagine.. It participates in protein modification; protein glycosylation. Oligosaccharyl transferase (OST) that catalyzes the initial transfer of a defined glycan (ManNAcXyl(2)GlcAMan(2)GalNAc in P.furiosus) from the lipid carrier dolichol-monophosphate to an asparagine residue within an Asn-X-Ser/Thr consensus motif in nascent polypeptide chains, the first step in protein N-glycosylation. This is Dolichyl-phosphooligosaccharide-protein glycotransferase 1 (aglB1) from Pyrococcus furiosus (strain ATCC 43587 / DSM 3638 / JCM 8422 / Vc1).